Consider the following 514-residue polypeptide: Periplasmic [NiFeSe] hydrogenase large subunit (514 aa).

Glu52 is a binding site for Fe cation. The Ni(2+) site is built by Cys71 and Cys74. Cys74 and Ile445 together coordinate Fe cation. Residues Sec493 and Cys496 each contribute to the Ni(2+) site. Residue Sec493 is a non-standard amino acid, selenocysteine. Fe cation is bound by residues Cys496 and His499.

This sequence belongs to the [NiFe]/[NiFeSe] hydrogenase large subunit family. As to quaternary structure, heterodimer of a large and a small subunit. Fe cation serves as cofactor. Ni(2+) is required as a cofactor.

It is found in the periplasm. The enzyme catalyses H2 + A = AH2. The protein is Periplasmic [NiFeSe] hydrogenase large subunit of Desulfomicrobium baculatum (Desulfovibrio baculatus).